The following is a 600-amino-acid chain: DNA polymerase alpha subunit B (600 aa).

Positions 112–167 (AYTTPSKGPHKRVSSTPETPLTKRSISTRSPHQLLSPSSFSPSATPSQKYSSRTNR) are disordered. The span at 125–140 (SSTPETPLTKRSISTR) shows a compositional bias: polar residues. Phosphoserine is present on Ser126. Thr127 and Thr130 each carry phosphothreonine. 4 positions are modified to phosphoserine: Ser141, Ser147, Ser152, and Ser154. Residues 141 to 158 (SPHQLLSPSSFSPSATPS) are compositionally biased toward low complexity.

This sequence belongs to the DNA polymerase alpha subunit B family. In terms of assembly, component of the alpha DNA polymerase complex (also known as the alpha DNA polymerase-primase complex) consisting of four subunits: the catalytic subunit POLA1, the regulatory subunit POLA2, and the primase complex subunits PRIM1 and PRIM2 respectively. Within the complex, POLA1 directly interacts with PRIM2. Post-translationally, phosphorylated in a cell cycle-dependent manner, in G2/M phase.

It is found in the nucleus. In terms of biological role, accessory subunit of the DNA polymerase alpha complex (also known as the alpha DNA polymerase-primase complex) which plays an essential role in the initiation of DNA synthesis. During the S phase of the cell cycle, the DNA polymerase alpha complex (composed of a catalytic subunit POLA1, an accessory subunit POLA2 and two primase subunits, the catalytic subunit PRIM1 and the regulatory subunit PRIM2) is recruited to DNA at the replicative forks via direct interactions with MCM10 and WDHD1. The primase subunit of the polymerase alpha complex initiates DNA synthesis by oligomerising short RNA primers on both leading and lagging strands. These primers are initially extended by the polymerase alpha catalytic subunit and subsequently transferred to polymerase delta and polymerase epsilon for processive synthesis on the lagging and leading strand, respectively. The polypeptide is DNA polymerase alpha subunit B (Pola2) (Rattus norvegicus (Rat)).